We begin with the raw amino-acid sequence, 348 residues long: Putative [LysW]-L-2-aminoadipate/[LysW]-L-glutamate phosphate reductase (348 aa).

9–12 (SGYV) serves as a coordination point for NADP(+). Cysteine 149 is a catalytic residue. Asparagine 315 contacts NADP(+).

Belongs to the NAGSA dehydrogenase family. Type 1 subfamily. LysY sub-subfamily.

Its subcellular location is the cytoplasm. It catalyses the reaction [amino-group carrier protein]-C-terminal-N-(1-carboxy-5-oxopentan-1-yl)-L-glutamine + phosphate + NADP(+) = [amino-group carrier protein]-C-terminal-N-(1-carboxy-5-phosphooxy-5-oxopentan-1-yl)-L-glutamine + NADPH + H(+). The enzyme catalyses [amino-group carrier protein]-C-terminal-gamma-(L-glutamyl-5-semialdehyde)-L-glutamate + phosphate + NADP(+) = [amino-group carrier protein]-C-terminal-gamma-(5-phospho-L-glutamyl)-L-glutamate + NADPH + H(+). It participates in amino-acid biosynthesis; L-lysine biosynthesis via AAA pathway; L-lysine from L-alpha-aminoadipate (Thermus route): step 3/5. Its pathway is amino-acid biosynthesis; L-arginine biosynthesis. In terms of biological role, involved in both the arginine and lysine biosynthetic pathways. This is Putative [LysW]-L-2-aminoadipate/[LysW]-L-glutamate phosphate reductase from Cenarchaeum symbiosum (strain A).